A 411-amino-acid polypeptide reads, in one-letter code: Probable tRNA pseudouridine synthase D (411 aa).

D79 functions as the Nucleophile in the catalytic mechanism. Residues G150–A369 enclose the TRUD domain.

This sequence belongs to the pseudouridine synthase TruD family.

The enzyme catalyses uridine(13) in tRNA = pseudouridine(13) in tRNA. In terms of biological role, could be responsible for synthesis of pseudouridine from uracil-13 in transfer RNAs. This is Probable tRNA pseudouridine synthase D from Thermoplasma acidophilum (strain ATCC 25905 / DSM 1728 / JCM 9062 / NBRC 15155 / AMRC-C165).